The sequence spans 122 residues: Immunoglobulin lambda variable 4-3 (122 aa).

The signal sequence occupies residues 1-19 (MAWVSFYLLPFIFSTGLCA). The tract at residues 20–44 (LPVLTQPPSASALLGASIKLTCTLS) is framework-1. One can recognise an Ig-like domain in the interval 21–122 (PVLTQPPSAS…ESHTIDGQVG (102 aa)). A disulfide bond links C41 and C111. Residues 45–51 (SEHSTYT) form a complementarity-determining-1 region. The interval 52-68 (IEWYQQRPGRSPQYIMK) is framework-2. The segment at 69–75 (VKSDGSH) is complementarity-determining-2. Residues 76 to 111 (SKGDGIPDRFMGSSSGADRYLTFSNLQSDDEAEYHC) form a framework-3 region. The complementarity-determining-3 stretch occupies residues 112–122 (GESHTIDGQVG).

Immunoglobulins are composed of two identical heavy chains and two identical light chains; disulfide-linked.

It localises to the secreted. The protein resides in the cell membrane. V region of the variable domain of immunoglobulin light chains that participates in the antigen recognition. Immunoglobulins, also known as antibodies, are membrane-bound or secreted glycoproteins produced by B lymphocytes. In the recognition phase of humoral immunity, the membrane-bound immunoglobulins serve as receptors which, upon binding of a specific antigen, trigger the clonal expansion and differentiation of B lymphocytes into immunoglobulins-secreting plasma cells. Secreted immunoglobulins mediate the effector phase of humoral immunity, which results in the elimination of bound antigens. The antigen binding site is formed by the variable domain of one heavy chain, together with that of its associated light chain. Thus, each immunoglobulin has two antigen binding sites with remarkable affinity for a particular antigen. The variable domains are assembled by a process called V-(D)-J rearrangement and can then be subjected to somatic hypermutations which, after exposure to antigen and selection, allow affinity maturation for a particular antigen. This is Immunoglobulin lambda variable 4-3 from Homo sapiens (Human).